The sequence spans 206 residues: Ribosomal RNA large subunit methyltransferase E (206 aa).

S-adenosyl-L-methionine is bound by residues Gly-60, Trp-62, Asp-80, Asp-96, and Asp-121. Lys-161 (proton acceptor) is an active-site residue.

This sequence belongs to the class I-like SAM-binding methyltransferase superfamily. RNA methyltransferase RlmE family.

It localises to the cytoplasm. It carries out the reaction uridine(2552) in 23S rRNA + S-adenosyl-L-methionine = 2'-O-methyluridine(2552) in 23S rRNA + S-adenosyl-L-homocysteine + H(+). Specifically methylates the uridine in position 2552 of 23S rRNA at the 2'-O position of the ribose in the fully assembled 50S ribosomal subunit. The chain is Ribosomal RNA large subunit methyltransferase E from Francisella tularensis subsp. holarctica (strain FTNF002-00 / FTA).